The following is a 185-amino-acid chain: Ribosome-recycling factor (185 aa).

The protein belongs to the RRF family.

Its subcellular location is the cytoplasm. In terms of biological role, responsible for the release of ribosomes from messenger RNA at the termination of protein biosynthesis. May increase the efficiency of translation by recycling ribosomes from one round of translation to another. The chain is Ribosome-recycling factor from Halorhodospira halophila (strain DSM 244 / SL1) (Ectothiorhodospira halophila (strain DSM 244 / SL1)).